We begin with the raw amino-acid sequence, 186 residues long: TATA box-binding protein-like 1 (186 aa).

Belongs to the TBP family. Binds TFIIA and TFIIB.

The protein resides in the cytoplasm. It localises to the nucleus. Functionally, part of a specialized transcription system that mediates the transcription of most ribosomal proteins through the 5'-TCT-3' motif which is a core promoter element at these genes. Seems to also mediate the transcription of NF1. Does not bind the TATA box. The polypeptide is TATA box-binding protein-like 1 (TBPL1) (Bos taurus (Bovine)).